The primary structure comprises 819 residues: Leucine--tRNA ligase (819 aa).

The short motif at 40 to 51 is the 'HIGH' region element; the sequence is PYPSGAGLHVGH. Residues 600-604 carry the 'KMSKS' region motif; the sequence is KMSKS. Residue lysine 603 coordinates ATP.

This sequence belongs to the class-I aminoacyl-tRNA synthetase family.

Its subcellular location is the cytoplasm. The catalysed reaction is tRNA(Leu) + L-leucine + ATP = L-leucyl-tRNA(Leu) + AMP + diphosphate. This is Leucine--tRNA ligase from Chlamydia trachomatis serovar L2 (strain ATCC VR-902B / DSM 19102 / 434/Bu).